The chain runs to 158 residues: Curculin-2 (158 aa).

The N-terminal stretch at methionine 1–alanine 22 is a signal peptide. Residues aspartate 23–cysteine 131 form the Bulb-type lectin domain. A disulfide bond links cysteine 51 and cysteine 74. A glycan (N-linked (GlcNAc...) asparagine) is linked at asparagine 103. A propeptide spanning residues glycine 136–asparagine 158 is cleaved from the precursor.

In terms of assembly, heterodimer with curculin-1; Disulfide-linked.

Its function is as follows. Taste-modifying protein; sweet-tasting. After curculin, water elicits a sweet taste, and sour substances induce a stronger sense of sweetness. The polypeptide is Curculin-2 (Molineria latifolia (Lumbah)).